Reading from the N-terminus, the 670-residue chain is DNA ligase (670 aa).

NAD(+)-binding positions include D36–D40, S85–L86, and E116. Catalysis depends on K118, which acts as the N6-AMP-lysine intermediate. Residues R139, E174, K290, and K314 each coordinate NAD(+). The Zn(2+) site is built by C408, C411, C426, and C431. Residues S591–Q670 form the BRCT domain.

Belongs to the NAD-dependent DNA ligase family. LigA subfamily. Mg(2+) serves as cofactor. It depends on Mn(2+) as a cofactor.

It carries out the reaction NAD(+) + (deoxyribonucleotide)n-3'-hydroxyl + 5'-phospho-(deoxyribonucleotide)m = (deoxyribonucleotide)n+m + AMP + beta-nicotinamide D-nucleotide.. In terms of biological role, DNA ligase that catalyzes the formation of phosphodiester linkages between 5'-phosphoryl and 3'-hydroxyl groups in double-stranded DNA using NAD as a coenzyme and as the energy source for the reaction. It is essential for DNA replication and repair of damaged DNA. The polypeptide is DNA ligase (Desulforamulus reducens (strain ATCC BAA-1160 / DSM 100696 / MI-1) (Desulfotomaculum reducens)).